The primary structure comprises 345 residues: Fructose-bisphosphate aldolase, plasmid (345 aa).

Serine 50 provides a ligand contact to D-glyceraldehyde 3-phosphate. Aspartate 83 acts as the Proton donor in catalysis. Residues histidine 84, aspartate 105, glutamate 142, and histidine 198 each coordinate Zn(2+). Glycine 199 is a binding site for dihydroxyacetone phosphate. Histidine 232 is a Zn(2+) binding site. Dihydroxyacetone phosphate-binding positions include 233-235 (GSS) and 275-278 (NIDT).

It belongs to the class II fructose-bisphosphate aldolase family. Homodimer. It depends on Zn(2+) as a cofactor.

The catalysed reaction is beta-D-fructose 1,6-bisphosphate = D-glyceraldehyde 3-phosphate + dihydroxyacetone phosphate. It participates in carbohydrate biosynthesis; Calvin cycle. The protein operates within carbohydrate degradation; glycolysis; D-glyceraldehyde 3-phosphate and glycerone phosphate from D-glucose: step 4/4. In terms of biological role, catalyzes the aldol condensation of dihydroxyacetone phosphate (DHAP or glycerone-phosphate) with glyceraldehyde 3-phosphate (G3P) to form fructose 1,6-bisphosphate (FBP) in gluconeogenesis and the reverse reaction in glycolysis. The sequence is that of Fructose-bisphosphate aldolase, plasmid (cbbAP) from Cupriavidus necator (strain ATCC 17699 / DSM 428 / KCTC 22496 / NCIMB 10442 / H16 / Stanier 337) (Ralstonia eutropha).